A 389-amino-acid polypeptide reads, in one-letter code: tRNA-specific 2-thiouridylase MnmA (389 aa).

ATP contacts are provided by residues 21 to 28 and Leu-47; that span reads AMSGGVDS. Cys-115 (nucleophile) is an active-site residue. Cys-115 and Cys-212 are oxidised to a cystine. Gly-139 lines the ATP pocket. The interval 162–164 is interaction with tRNA; it reads RDQ. The active-site Cysteine persulfide intermediate is Cys-212.

This sequence belongs to the MnmA/TRMU family.

It localises to the cytoplasm. The catalysed reaction is S-sulfanyl-L-cysteinyl-[protein] + uridine(34) in tRNA + AH2 + ATP = 2-thiouridine(34) in tRNA + L-cysteinyl-[protein] + A + AMP + diphosphate + H(+). Catalyzes the 2-thiolation of uridine at the wobble position (U34) of tRNA, leading to the formation of s(2)U34. The protein is tRNA-specific 2-thiouridylase MnmA of Xanthobacter autotrophicus (strain ATCC BAA-1158 / Py2).